Consider the following 655-residue polypeptide: Acetyl-coenzyme A synthetase (655 aa).

CoA is bound by residues 196-199 (RGGK) and Thr316. Residues 392–394 (GEP), 416–421 (DTWWQT), Asp507, and Arg522 each bind ATP. Ser530 is a CoA binding site. An ATP-binding site is contributed by Arg533. Positions 544 and 549 each coordinate Mg(2+). Lys619 carries the post-translational modification N6-acetyllysine.

It belongs to the ATP-dependent AMP-binding enzyme family. Requires Mg(2+) as cofactor. In terms of processing, acetylated. Deacetylation by the SIR2-homolog deacetylase activates the enzyme.

The enzyme catalyses acetate + ATP + CoA = acetyl-CoA + AMP + diphosphate. Its function is as follows. Catalyzes the conversion of acetate into acetyl-CoA (AcCoA), an essential intermediate at the junction of anabolic and catabolic pathways. AcsA undergoes a two-step reaction. In the first half reaction, AcsA combines acetate with ATP to form acetyl-adenylate (AcAMP) intermediate. In the second half reaction, it can then transfer the acetyl group from AcAMP to the sulfhydryl group of CoA, forming the product AcCoA. The protein is Acetyl-coenzyme A synthetase of Thiobacillus denitrificans (strain ATCC 25259 / T1).